The primary structure comprises 173 residues: uncharacterized protein (173 aa).

One can recognise an N-acetyltransferase domain in the interval 4-173 (VKIVQVSEKD…TDFLLKKALV (170 aa)). Residues 97–99 (IYL), 106–110 (RGLGK), and 136–138 (NEN) contribute to the acetyl-CoA site.

This is an uncharacterized protein from Lactobacillus delbrueckii subsp. lactis.